Here is a 177-residue protein sequence, read N- to C-terminus: MARFMAYNQNPQMLALCITVAVMFLGVRSELSQDIKGCQDAMSDLYSCLPFVTNKAKAPDSTCCSTLKVKIDKGQTRKCLCTLVKDRDDPGLGFKVDANRAMSLPSACHVPANISQCPDLLHLLPDSPASQIFKQFTESSSQTVGHKAVSTSSSIKGRDNKQFGLMMAGALSIWYIM.

The first 29 residues, 1 to 29 (MARFMAYNQNPQMLALCITVAVMFLGVRS), serve as a signal peptide directing secretion. Disulfide bonds link cysteine 38–cysteine 81, cysteine 48–cysteine 63, cysteine 64–cysteine 108, and cysteine 79–cysteine 117. The N-linked (GlcNAc...) asparagine glycan is linked to asparagine 113. Serine 152 is lipidated: GPI-anchor amidated serine. Positions 153-177 (SSIKGRDNKQFGLMMAGALSIWYIM) are cleaved as a propeptide — removed in mature form.

This sequence belongs to the plant LTP family. In terms of tissue distribution, expressed in seedlings, preferentially in hypocotyls and roots. Also observed in siliques.

It localises to the cell membrane. Its function is as follows. Probable lipid transfer protein. The protein is Non-specific lipid transfer protein GPI-anchored 22 of Arabidopsis thaliana (Mouse-ear cress).